Here is a 70-residue protein sequence, read N- to C-terminus: Small ribosomal subunit protein bS21 (70 aa).

This sequence belongs to the bacterial ribosomal protein bS21 family.

The protein is Small ribosomal subunit protein bS21 of Helicobacter hepaticus (strain ATCC 51449 / 3B1).